The following is a 656-amino-acid chain: Threonine--tRNA ligase (656 aa).

The 66-residue stretch at 2-67 folds into the TGS domain; it reads LMSQITIILP…KDQTKVALVT (66 aa). Residues 251–542 form a catalytic region; it reads DHRKLGKELG…YLEHTAGHLP (292 aa). Residues Cys-342, His-393, and His-519 each contribute to the Zn(2+) site.

The protein belongs to the class-II aminoacyl-tRNA synthetase family. In terms of assembly, homodimer. It depends on Zn(2+) as a cofactor.

The protein localises to the cytoplasm. It catalyses the reaction tRNA(Thr) + L-threonine + ATP = L-threonyl-tRNA(Thr) + AMP + diphosphate + H(+). Functionally, catalyzes the attachment of threonine to tRNA(Thr) in a two-step reaction: L-threonine is first activated by ATP to form Thr-AMP and then transferred to the acceptor end of tRNA(Thr). Also edits incorrectly charged L-seryl-tRNA(Thr). This chain is Threonine--tRNA ligase, found in Bdellovibrio bacteriovorus (strain ATCC 15356 / DSM 50701 / NCIMB 9529 / HD100).